Consider the following 192-residue polypeptide: MGKGCKVVVCGLLSVGKTAILEQLLYGNHTIGMEDCETMEDVYMASVETDRGVKEQLHLYDTRGLQEGVELPKHYFSFADGFVLVYSVNNLESFQRVELLKKEIDKFKDKKEVAIVVLGNKIDLSEQRQVDAEVAQQWAKSEKVRLWEVTVTDRKTLIEPFTLLASKLSQPQSKSSFPLPGRKNKGNSNSEN.

11 to 18 (GLLSVGKT) is a binding site for GTP. The Effector region signature appears at 35–43 (DCETMEDVY). Positions 58–93 (HLYDTRGLQEGVELPKHYFSFADGFVLVYSVNNLES) are interactions with NFKBIA and NFKBIB. GTP-binding positions include 61–65 (DTRGL) and 120–123 (NKID). A disordered region spans residues 168–192 (LSQPQSKSSFPLPGRKNKGNSNSEN).

The protein belongs to the small GTPase superfamily. Ras family. KappaB-Ras subfamily. As to quaternary structure, interacts with both NF-kappa-B inhibitor alpha (NFKBIA) and beta (NFKBIB) in vitro. However, it probably only interacts with NFKBIB in vivo. Forms a complex with NFKBIB and NF-kappa-B heterodimer (p50/NFKB1 and p65/RELA). Also interacts with c-Rel (REL). In terms of tissue distribution, widely expressed.

The protein resides in the cytoplasm. Atypical Ras-like protein that acts as a potent regulator of NF-kappa-B activity by preventing the degradation of NF-kappa-B inhibitor beta (NFKBIB) by most signals, explaining why NFKBIB is more resistant to degradation. May act by blocking phosphorylation of NFKBIB and mediating cytoplasmic retention of p65/RELA NF-kappa-B subunit. It is unclear whether it acts as a GTPase. Both GTP- and GDP-bound forms block phosphorylation of NFKBIB. The sequence is that of NF-kappa-B inhibitor-interacting Ras-like protein 1 (NKIRAS1) from Homo sapiens (Human).